The following is a 396-amino-acid chain: MTINPVSRKVAWLRVVTLAIAAFIFNTTEFVPVGLLSDIAESFHMQTAQVGIMLTIYAWVVAVMSLPFMLLTSQMERRKLLIYLFVLFIASHVLSFLAWNFTVLVISRIGIAFAHAIFWSITASLAIRLAPAGKRAQALSLIATGTALAMVLGLPIGRVVGQYFGWRTTFFAIGMGALITLLCLIKLLPKLPSEHSGSLKSLPLLFRRPALMSLYVLTVVVVTAHYTAYSYIEPFVQNVAGLSANFATVLLLILGGAGIIGSLVFGKLGNRHASSLVSIAIALLVVCLLLLLPAAESEAHLAILSIFWGIAIMVIGLGMQVKVLALAPDATDVAMALFSGIFNIGIGAGALVGNQVSLHWSMSAIGYIGAIPACAALVWAVLIFRKWPVTLEEQPH.

Over 1–14 (MTINPVSRKVAWLR) the chain is Cytoplasmic. The helical transmembrane segment at 15–35 (VVTLAIAAFIFNTTEFVPVGL) threads the bilayer. The Periplasmic segment spans residues 36-49 (LSDIAESFHMQTAQ). A helical membrane pass occupies residues 50 to 70 (VGIMLTIYAWVVAVMSLPFML). The Cytoplasmic segment spans residues 71–80 (LTSQMERRKL). The helical transmembrane segment at 81–101 (LIYLFVLFIASHVLSFLAWNF) threads the bilayer. Position 102 (threonine 102) is a topological domain, periplasmic. A helical membrane pass occupies residues 103 to 123 (VLVISRIGIAFAHAIFWSITA). Residues 124 to 135 (SLAIRLAPAGKR) are Cytoplasmic-facing. The helical transmembrane segment at 136–156 (AQALSLIATGTALAMVLGLPI) threads the bilayer. Over 157 to 168 (GRVVGQYFGWRT) the chain is Periplasmic. The helical transmembrane segment at 169-189 (TFFAIGMGALITLLCLIKLLP) threads the bilayer. The Cytoplasmic portion of the chain corresponds to 190-208 (KLPSEHSGSLKSLPLLFRR). Residues 209-229 (PALMSLYVLTVVVVTAHYTAY) traverse the membrane as a helical segment. At 230 to 245 (SYIEPFVQNVAGLSAN) the chain is on the periplasmic side. The chain crosses the membrane as a helical span at residues 246 to 266 (FATVLLLILGGAGIIGSLVFG). At 267–274 (KLGNRHAS) the chain is on the cytoplasmic side. Residues 275–295 (SLVSIAIALLVVCLLLLLPAA) traverse the membrane as a helical segment. The Periplasmic portion of the chain corresponds to 296–300 (ESEAH). Residues 301-321 (LAILSIFWGIAIMVIGLGMQV) traverse the membrane as a helical segment. Topologically, residues 322–332 (KVLALAPDATD) are cytoplasmic. A helical membrane pass occupies residues 333-353 (VAMALFSGIFNIGIGAGALVG). The Periplasmic segment spans residues 354–363 (NQVSLHWSMS). Residues 364 to 384 (AIGYIGAIPACAALVWAVLIF) form a helical membrane-spanning segment. Topologically, residues 385-396 (RKWPVTLEEQPH) are cytoplasmic.

It belongs to the major facilitator superfamily. SotB (TC 2.A.1.2) family.

Its subcellular location is the cell inner membrane. Its function is as follows. Involved in the efflux of sugars. The physiological role may be the reduction of the intracellular concentration of toxic sugars or sugar metabolites. This chain is Probable sugar efflux transporter, found in Salmonella typhimurium (strain LT2 / SGSC1412 / ATCC 700720).